The primary structure comprises 175 residues: Catabolic 3-dehydroquinase (175 aa).

Tyrosine 23 serves as the catalytic Proton acceptor. Residues asparagine 74, histidine 80, and aspartate 87 each contribute to the substrate site. The active-site Proton donor is histidine 100. Substrate is bound by residues 101–102 and arginine 111; that span reads IS.

This sequence belongs to the type-II 3-dehydroquinase family. As to quaternary structure, homododecamer. Adopts a ring-like structure, composed of an arrangement of two hexameric rings stacked on top of one another.

It carries out the reaction 3-dehydroquinate = 3-dehydroshikimate + H2O. Its pathway is aromatic compound metabolism; 3,4-dihydroxybenzoate biosynthesis; 3,4-dihydroxybenzoate from 3-dehydroquinate: step 1/2. Is involved in the catabolism of quinate. Allows the utilization of quinate as carbon source via the beta-ketoadipate pathway. This is Catabolic 3-dehydroquinase from Talaromyces marneffei (strain ATCC 18224 / CBS 334.59 / QM 7333) (Penicillium marneffei).